Consider the following 217-residue polypeptide: UPF0502 protein ESA_02280 (217 aa).

The protein belongs to the UPF0502 family.

This chain is UPF0502 protein ESA_02280, found in Cronobacter sakazakii (strain ATCC BAA-894) (Enterobacter sakazakii).